A 67-amino-acid chain; its full sequence is Small ribosomal subunit protein eS31 (67 aa).

4 residues coordinate Zn(2+): C31, C34, C49, and C52. A C4-type zinc finger spans residues 31-52 (CPKCGAGVFMAEHLNRFACGKC).

The protein belongs to the eukaryotic ribosomal protein eS31 family. In terms of assembly, part of the 30S ribosomal subunit. Requires Zn(2+) as cofactor.

This is Small ribosomal subunit protein eS31 from Methanococcus maripaludis (strain C6 / ATCC BAA-1332).